The primary structure comprises 241 residues: Host range factor p28 (241 aa).

The 111-residue stretch at 21 to 131 folds into the KilA-N domain; that stretch reads YIDEPNDIRL…QSILRGLVNW (111 aa). An RING-type zinc finger spans residues 172-225; the sequence is CGICYEVVYSKRLENDRYFGLLDSCNHIFCITCINIWHRTRRETGASDNCPICR.

Belongs to the orthopoxvirus OPG021 family.

The protein resides in the host cytoplasm. It catalyses the reaction S-ubiquitinyl-[E2 ubiquitin-conjugating enzyme]-L-cysteine + [acceptor protein]-L-lysine = [E2 ubiquitin-conjugating enzyme]-L-cysteine + N(6)-ubiquitinyl-[acceptor protein]-L-lysine.. Its function is as follows. RING-finger E3 ubiquitin ligase which catalyzes the formation of both 'Lys-48'- and 'Lys-63'-linked polyubiquitin chains. Plays an important role in virulence by acting as an anti-apoptotic factor. This Ectromelia virus (strain Moscow) (ECTV) protein is Host range factor p28 (OPG021).